Here is an 88-residue protein sequence, read N- to C-terminus: Large ribosomal subunit protein bL27 (88 aa).

A disordered region spans residues 1 to 24 (MAHKKGTGSTRNGRDSNSKRLGVK).

This sequence belongs to the bacterial ribosomal protein bL27 family.

This is Large ribosomal subunit protein bL27 from Synechococcus sp. (strain CC9311).